Reading from the N-terminus, the 100-residue chain is Omega-hexatoxin-Asp2b (100 aa).

The N-terminal stretch at 1 to 23 is a signal peptide; the sequence is MKFSKLSITLAVILTQAVFVLCG. A propeptide spanning residues 24 to 55 is cleaved from the precursor; the sequence is MKNEDFMEKGLESNELHDAIKKPVNSGKPDTE. Cystine bridges form between Cys60–Cys73, Cys66–Cys79, and Cys72–Cys84.

Belongs to the neurotoxin 15 family. 02 (omega-actx) subfamily. Expressed by the venom gland.

The protein localises to the secreted. In terms of biological role, potent inhibitor of insect, but not mammalian, voltage-gated calcium channels (Cav). The polypeptide is Omega-hexatoxin-Asp2b (Atrax sp. (strain Illawarra) (Funnel-web spider)).